We begin with the raw amino-acid sequence, 427 residues long: Serine hydroxymethyltransferase (427 aa).

(6S)-5,6,7,8-tetrahydrofolate-binding positions include Leu124 and 128-130; that span reads GHL. Lys233 is subject to N6-(pyridoxal phosphate)lysine.

This sequence belongs to the SHMT family. As to quaternary structure, homodimer. It depends on pyridoxal 5'-phosphate as a cofactor.

It localises to the cytoplasm. It catalyses the reaction (6R)-5,10-methylene-5,6,7,8-tetrahydrofolate + glycine + H2O = (6S)-5,6,7,8-tetrahydrofolate + L-serine. Its pathway is one-carbon metabolism; tetrahydrofolate interconversion. It functions in the pathway amino-acid biosynthesis; glycine biosynthesis; glycine from L-serine: step 1/1. Functionally, catalyzes the reversible interconversion of serine and glycine with tetrahydrofolate (THF) serving as the one-carbon carrier. This reaction serves as the major source of one-carbon groups required for the biosynthesis of purines, thymidylate, methionine, and other important biomolecules. Also exhibits THF-independent aldolase activity toward beta-hydroxyamino acids, producing glycine and aldehydes, via a retro-aldol mechanism. The sequence is that of Serine hydroxymethyltransferase from Acidothermus cellulolyticus (strain ATCC 43068 / DSM 8971 / 11B).